Reading from the N-terminus, the 229-residue chain is Transcriptional activator protein IrlR (229 aa).

One can recognise a Response regulatory domain in the interval Arg2–Leu115. Asp51 carries the 4-aspartylphosphate modification. The segment at residues Ser123 to Val221 is a DNA-binding region (ompR/PhoB-type).

Post-translationally, phosphorylated by IrlS.

Member of the two-component regulatory system IrlR/IrlS. May be involved in invasion of eukaryotic cells and heavy-metal resistance. This chain is Transcriptional activator protein IrlR (irlR), found in Burkholderia pseudomallei (strain 1026b).